The primary structure comprises 226 residues: UPF0502 protein Gbem_0194 (226 aa).

Belongs to the UPF0502 family.

The protein is UPF0502 protein Gbem_0194 of Citrifermentans bemidjiense (strain ATCC BAA-1014 / DSM 16622 / JCM 12645 / Bem) (Geobacter bemidjiensis).